Here is a 146-residue protein sequence, read N- to C-terminus: Putative pre-16S rRNA nuclease (146 aa).

Belongs to the YqgF nuclease family.

The protein resides in the cytoplasm. In terms of biological role, could be a nuclease involved in processing of the 5'-end of pre-16S rRNA. The chain is Putative pre-16S rRNA nuclease from Methylobacillus flagellatus (strain ATCC 51484 / DSM 6875 / VKM B-1610 / KT).